The sequence spans 497 residues: Cysteine--tRNA ligase (497 aa).

Cys46 lines the Zn(2+) pocket. The 'HIGH' region signature appears at 48–58 (PTVYSDAHLGH). Cys237, His262, and Glu266 together coordinate Zn(2+). A 'KMSKS' region motif is present at residues 293-297 (KMSKS). Lys296 contacts ATP.

This sequence belongs to the class-I aminoacyl-tRNA synthetase family. In terms of assembly, monomer. Zn(2+) serves as cofactor.

It is found in the cytoplasm. It catalyses the reaction tRNA(Cys) + L-cysteine + ATP = L-cysteinyl-tRNA(Cys) + AMP + diphosphate. The polypeptide is Cysteine--tRNA ligase (Deinococcus geothermalis (strain DSM 11300 / CIP 105573 / AG-3a)).